The chain runs to 233 residues: MSLLDPRQFLLPAFYLDPSTQAFLTQAVSNHKLGTASSFRISDILEPSPNNSTYSHDLDPSPQSVRSDLSTSPRASSPDRNSPMSKKSRKARTIFTDKQLQELENTFEKQKYLSVQDRMDLAHRMGLSDTQVKTWYQNRRTKWKRQATSGMDLLSEPGNLSAVQNLIRSSPYWANYITALPMGGQMGQMPMMGLPMPMIVPPAQHFQATSSSNSPSTHKSSESPQLDVSSNSD.

Positions 50–85 are enriched in polar residues; it reads NNSTYSHDLDPSPQSVRSDLSTSPRASSPDRNSPMS. Disordered regions lie at residues 50–93 and 206–233; these read NNST…KART and FQAT…SNSD. A DNA-binding region (homeobox) is located at residues 88–147; it reads SRKARTIFTDKQLQELENTFEKQKYLSVQDRMDLAHRMGLSDTQVKTWYQNRRTKWKRQA. The segment covering 224–233 has biased composition (polar residues); it reads PQLDVSSNSD.

It localises to the nucleus. In terms of biological role, cell-type specific anti-apoptotic transcription factor required for the sexually dimorphic survival of the male-specific CEM (cephalic male) sensory neurons during sex determination. In hermaphrodites, the homologous cells undergo programmed cell death due to transcriptional repression of ceh-30 by tra-1, the terminal regulator in the sex determination pathway. This is Homeobox protein ceh-30 from Caenorhabditis briggsae.